The following is a 450-amino-acid chain: 3-phosphoshikimate 1-carboxyvinyltransferase (450 aa).

Positions 28, 29, and 33 each coordinate 3-phosphoshikimate. Lys28 serves as a coordination point for phosphoenolpyruvate. Phosphoenolpyruvate contacts are provided by Gly100 and Arg128. Residues Ser173, Gln175, Asp326, and Lys353 each coordinate 3-phosphoshikimate. Gln175 serves as a coordination point for phosphoenolpyruvate. Catalysis depends on Asp326, which acts as the Proton acceptor. Arg357 and Arg402 together coordinate phosphoenolpyruvate.

Belongs to the EPSP synthase family. Monomer.

Its subcellular location is the cytoplasm. It carries out the reaction 3-phosphoshikimate + phosphoenolpyruvate = 5-O-(1-carboxyvinyl)-3-phosphoshikimate + phosphate. The protein operates within metabolic intermediate biosynthesis; chorismate biosynthesis; chorismate from D-erythrose 4-phosphate and phosphoenolpyruvate: step 6/7. Its function is as follows. Catalyzes the transfer of the enolpyruvyl moiety of phosphoenolpyruvate (PEP) to the 5-hydroxyl of shikimate-3-phosphate (S3P) to produce enolpyruvyl shikimate-3-phosphate and inorganic phosphate. The sequence is that of 3-phosphoshikimate 1-carboxyvinyltransferase from Brucella canis (strain ATCC 23365 / NCTC 10854 / RM-666).